Reading from the N-terminus, the 131-residue chain is Small ribosomal subunit protein uS8 (131 aa).

Belongs to the universal ribosomal protein uS8 family. Part of the 30S ribosomal subunit. Contacts proteins S5 and S12.

Functionally, one of the primary rRNA binding proteins, it binds directly to 16S rRNA central domain where it helps coordinate assembly of the platform of the 30S subunit. This chain is Small ribosomal subunit protein uS8, found in Hydrogenovibrio crunogenus (strain DSM 25203 / XCL-2) (Thiomicrospira crunogena).